The following is a 551-amino-acid chain: HTH-type transcriptional regulator SgrR (551 aa).

The region spanning M1–R116 is the HTH marR-type domain. A DNA-binding region (H-T-H motif) is located at residues L26–D49. The solute-binding stretch occupies residues E163–W492.

Its function is as follows. Activates the small RNA gene sgrS under glucose-phosphate stress conditions as well as yfdZ. Represses its own transcription under both stress and non-stress conditions. Might act as a sensor of the intracellular accumulation of phosphoglucose by binding these molecules in its C-terminal solute-binding domain. This chain is HTH-type transcriptional regulator SgrR, found in Shigella flexneri serotype 5b (strain 8401).